The following is a 310-amino-acid chain: Proline iminopeptidase (310 aa).

One can recognise an AB hydrolase-1 domain in the interval 33–290 (PVIFLHGGPG…RVVQAGHCAF (258 aa)). Ser-107 (nucleophile) is an active-site residue. Residue Asp-260 is part of the active site. Residue His-287 is the Proton donor of the active site.

It belongs to the peptidase S33 family.

It is found in the cytoplasm. It carries out the reaction Release of N-terminal proline from a peptide.. In terms of biological role, hydrolyzes peptides having the structure Pro-Y-Z to yield free proline. Also hydrolyzes the dipeptide Pro-Gly. This Neisseria gonorrhoeae protein is Proline iminopeptidase (pip).